The primary structure comprises 391 residues: Formate-dependent phosphoribosylglycinamide formyltransferase (391 aa).

N(1)-(5-phospho-beta-D-ribosyl)glycinamide is bound by residues Glu-18–Leu-19 and Glu-78. ATP is bound by residues Arg-110, Lys-151, Ser-156–Gln-161, Glu-191–Ile-194, and Glu-199. The ATP-grasp domain occupies Glu-115–Leu-305. Residues Glu-264 and Glu-276 each contribute to the Mg(2+) site. Residues Asp-283, Lys-353, and Arg-360–Arg-361 each bind N(1)-(5-phospho-beta-D-ribosyl)glycinamide.

The protein belongs to the PurK/PurT family. As to quaternary structure, homodimer.

The catalysed reaction is N(1)-(5-phospho-beta-D-ribosyl)glycinamide + formate + ATP = N(2)-formyl-N(1)-(5-phospho-beta-D-ribosyl)glycinamide + ADP + phosphate + H(+). Its pathway is purine metabolism; IMP biosynthesis via de novo pathway; N(2)-formyl-N(1)-(5-phospho-D-ribosyl)glycinamide from N(1)-(5-phospho-D-ribosyl)glycinamide (formate route): step 1/1. In terms of biological role, involved in the de novo purine biosynthesis. Catalyzes the transfer of formate to 5-phospho-ribosyl-glycinamide (GAR), producing 5-phospho-ribosyl-N-formylglycinamide (FGAR). Formate is provided by PurU via hydrolysis of 10-formyl-tetrahydrofolate. The protein is Formate-dependent phosphoribosylglycinamide formyltransferase of Nostoc sp. (strain PCC 7120 / SAG 25.82 / UTEX 2576).